Reading from the N-terminus, the 434-residue chain is Methylenetetrahydrofolate--tRNA-(uracil-5-)-methyltransferase TrmFO (434 aa).

9-14 (GAGLAG) contacts FAD.

This sequence belongs to the MnmG family. TrmFO subfamily. FAD serves as cofactor.

It is found in the cytoplasm. It carries out the reaction uridine(54) in tRNA + (6R)-5,10-methylene-5,6,7,8-tetrahydrofolate + NADH + H(+) = 5-methyluridine(54) in tRNA + (6S)-5,6,7,8-tetrahydrofolate + NAD(+). The catalysed reaction is uridine(54) in tRNA + (6R)-5,10-methylene-5,6,7,8-tetrahydrofolate + NADPH + H(+) = 5-methyluridine(54) in tRNA + (6S)-5,6,7,8-tetrahydrofolate + NADP(+). Its function is as follows. Catalyzes the folate-dependent formation of 5-methyl-uridine at position 54 (M-5-U54) in all tRNAs. The protein is Methylenetetrahydrofolate--tRNA-(uracil-5-)-methyltransferase TrmFO of Fusobacterium nucleatum subsp. nucleatum (strain ATCC 25586 / DSM 15643 / BCRC 10681 / CIP 101130 / JCM 8532 / KCTC 2640 / LMG 13131 / VPI 4355).